A 201-amino-acid chain; its full sequence is Musculin (201 aa).

Disordered stretches follow at residues M1–N108 and R182–A201. The span at S46 to P56 shows a compositional bias: acidic residues. The Nuclear localization signal signature appears at K66–R71. The segment covering D74–G86 has biased composition (gly residues). The region spanning S102–L154 is the bHLH domain.

As to quaternary structure, efficient DNA binding requires dimerization with another bHLH protein. Binds DNA as a homodimer or a heterodimer. Forms a heterodimer with TCF3.

Its subcellular location is the nucleus. Its function is as follows. Transcription repressor that blocks myogenesis and activation of E-box dependent muscle genes. This chain is Musculin (Msc), found in Mus musculus (Mouse).